The following is a 283-amino-acid chain: Cyclin-C (283 aa).

Residues 46-144 (NVIQALGEHL…ILECEFYLLE (99 aa)) form the Cyclin N-terminal domain. A disordered region spans residues 252–283 (SILSKMPKPKPPPNSDGEQGTNGSQSSGYSQS). The segment covering 267–283 (DGEQGTNGSQSSGYSQS) has biased composition (polar residues).

The protein belongs to the cyclin family. Cyclin C subfamily. As to quaternary structure, component of the Mediator complex. The cylin/CDK pair formed by ccnc/cdk8 also associates with the large subunit of RNA polymerase II.

It localises to the nucleus. Functionally, component of the Mediator complex, a coactivator involved in regulated gene transcription of nearly all RNA polymerase II-dependent genes. Mediator functions as a bridge to convey information from gene-specific regulatory proteins to the basal RNA polymerase II transcription machinery. Mediator is recruited to promoters by direct interactions with regulatory proteins and serves as a scaffold for the assembly of a functional preinitiation complex with RNA polymerase II and the general transcription factors. Binds to and activates cyclin-dependent kinase cdk8 that phosphorylates the CTD (C-terminal domain) of the large subunit of RNA polymerase II (RNAp II), which may inhibit the formation of a transcription initiation complex. The polypeptide is Cyclin-C (ccnc) (Xenopus laevis (African clawed frog)).